The following is a 451-amino-acid chain: Serine--tRNA ligase (451 aa).

247 to 249 (TAE) is a binding site for L-serine. ATP is bound by residues 278–280 (RKE) and V294. Residue E301 participates in L-serine binding. 365–368 (ELAS) serves as a coordination point for ATP. T400 serves as a coordination point for L-serine.

Belongs to the class-II aminoacyl-tRNA synthetase family. Type-1 seryl-tRNA synthetase subfamily. As to quaternary structure, homodimer. The tRNA molecule binds across the dimer.

Its subcellular location is the cytoplasm. The enzyme catalyses tRNA(Ser) + L-serine + ATP = L-seryl-tRNA(Ser) + AMP + diphosphate + H(+). The catalysed reaction is tRNA(Sec) + L-serine + ATP = L-seryl-tRNA(Sec) + AMP + diphosphate + H(+). Its pathway is aminoacyl-tRNA biosynthesis; selenocysteinyl-tRNA(Sec) biosynthesis; L-seryl-tRNA(Sec) from L-serine and tRNA(Sec): step 1/1. In terms of biological role, catalyzes the attachment of serine to tRNA(Ser). Is also able to aminoacylate tRNA(Sec) with serine, to form the misacylated tRNA L-seryl-tRNA(Sec), which will be further converted into selenocysteinyl-tRNA(Sec). This chain is Serine--tRNA ligase, found in Pyrobaculum aerophilum (strain ATCC 51768 / DSM 7523 / JCM 9630 / CIP 104966 / NBRC 100827 / IM2).